Here is a 377-residue protein sequence, read N- to C-terminus: MIQLLMAAGLGLVFSIFGTPALIKVLARHGYGQYIRDDGPTSHQTKRGTPTMGGVAILLSVVAAYLVTHLISVLAWPENGGITLSGLLALGLMLGMGMVGFLDDYKKISKKQNLGLTAAGKMVLQGAIGSAFAVLVLFFPDAAGNTPASTAISWTRDTGVDLAFAGPVVGLILFVVWVNLIATGTTNAVNLTDGLDGLATGASILVFSGYMLITLWQAGHLCENAAQAACYAVRDPMDLSIVAAALVGALIGFLWWNTSPAKIFMGDTGSLGLGGALAAFAVLSRTELLLVLIAGLFVVITMSVILQVGYFKLSHGKRIFKMAPLQHHFELKGWQEVTIVVRFWVIAGLFVAAALGVFYGDWLLHNGGAFPGAEALH.

The next 10 helical transmembrane spans lie at 2-22 (IQLL…TPAL), 55-75 (VAIL…SVLA), 82-102 (ITLS…VGFL), 122-142 (MVLQ…FPDA), 162-182 (LAFA…NLIA), 195-215 (LDGL…LITL), 236-256 (PMDL…FLWW), 263-283 (IFMG…FAVL), 288-308 (LLLV…ILQV), and 343-363 (FWVI…GDWL).

Belongs to the glycosyltransferase 4 family. MraY subfamily. Requires Mg(2+) as cofactor.

The protein localises to the cell membrane. The catalysed reaction is UDP-N-acetyl-alpha-D-muramoyl-L-alanyl-gamma-D-glutamyl-meso-2,6-diaminopimeloyl-D-alanyl-D-alanine + di-trans,octa-cis-undecaprenyl phosphate = di-trans,octa-cis-undecaprenyl diphospho-N-acetyl-alpha-D-muramoyl-L-alanyl-D-glutamyl-meso-2,6-diaminopimeloyl-D-alanyl-D-alanine + UMP. It functions in the pathway cell wall biogenesis; peptidoglycan biosynthesis. Its function is as follows. Catalyzes the initial step of the lipid cycle reactions in the biosynthesis of the cell wall peptidoglycan: transfers peptidoglycan precursor phospho-MurNAc-pentapeptide from UDP-MurNAc-pentapeptide onto the lipid carrier undecaprenyl phosphate, yielding undecaprenyl-pyrophosphoryl-MurNAc-pentapeptide, known as lipid I. In Kocuria rhizophila (strain ATCC 9341 / DSM 348 / NBRC 103217 / DC2201), this protein is Phospho-N-acetylmuramoyl-pentapeptide-transferase.